We begin with the raw amino-acid sequence, 332 residues long: Nuclear migration protein nudC (332 aa).

The segment at 122 to 161 (RQQLLDSAGGEPSASNRDGISKPIEKVDDESDKSELGKLM) is disordered. One can recognise a CS domain in the interval 168–259 (CTLENYTWTQ…NKMNWWSRLV (92 aa)).

It belongs to the nudC family. As to quaternary structure, interacts with PCID2.

It is found in the cytoplasm. Functionally, chaperone protein with functions in nuclear localization and cytoplasmic mRNA trafficking. In postmitotic neurons, acts with nudE downstream of dar1 to ensure correct positioning of the nuclei in primary dendrites and as a consequence, is required for determining multipolar neuron morphology. Stabilizes PCID2 in the cytoplasm and thereby is required for promoting cytoplasmic mRNA trafficking. This Drosophila melanogaster (Fruit fly) protein is Nuclear migration protein nudC.